We begin with the raw amino-acid sequence, 649 residues long: Thioredoxin reductase 1, cytoplasmic (649 aa).

Methionine 1 carries the post-translational modification N-acetylmethionine. Residues 1–49 (MGCAEGKAVAAAAPTELQTKGKNGDGRRRSAKDHHPGKTLPENPAGFTS) are disordered. The segment covering 22–36 (KNGDGRRRSAKDHHP) has biased composition (basic and acidic residues). Residues 56 to 156 (RALLQAYIDG…KLLKMNGPED (101 aa)) enclose the Glutaredoxin domain. A required for interaction with ESR1 and ESR2 region spans residues 145 to 149 (LQKLL). Residues 172–173 (SG), 192–193 (DF), 208–209 (TC), and 213–217 (GCIPK) each bind FAD. Cysteine 209 and cysteine 214 are oxidised to a cystine. Residue lysine 218 is modified to N6-succinyllysine. Tyrosine 281 carries the phosphotyrosine modification. FAD is bound by residues 281-282 (YG) and threonine 311. Residues arginine 316, 348–354 (ASYVALE), 371–372 (RS), arginine 376, 376–378 (RGF), 442–443 (GR), and lysine 465 contribute to the NADP(+) site. Tyrosine 350 contributes to the FAD binding site. FAD-binding positions include aspartate 484, 491–493 (ELT), and histidine 622. Glutamate 491 provides a ligand contact to NADP(+). The active-site Proton acceptor is histidine 622. The cysteinyl-selenocysteine (Cys-Sec) cross-link spans 647-648 (CU). A non-standard amino acid (selenocysteine) is located at residue selenocysteine 648.

Belongs to the class-I pyridine nucleotide-disulfide oxidoreductase family. As to quaternary structure, homodimer. Interacts with HERC5. In terms of assembly, interacts with ESR1 and ESR2. It depends on FAD as a cofactor. Post-translationally, the N-terminus is blocked. ISGylated. Expressed predominantly in Leydig cells (at protein level). Also expressed in ovary, spleen, heart, liver, kidney and pancreas and in a number of cancer cell lines. As to expression, widely expressed with highest levels in kidney, testis, uterus, ovary, prostate, placenta and fetal liver.

The protein localises to the cytoplasm. The protein resides in the nucleus. It carries out the reaction [thioredoxin]-dithiol + NADP(+) = [thioredoxin]-disulfide + NADPH + H(+). It catalyses the reaction H2O2 + NADPH + H(+) = NADP(+) + 2 H2O. Its function is as follows. Reduces disulfideprotein thioredoxin (Trx) to its dithiol-containing form. Homodimeric flavoprotein involved in the regulation of cellular redox reactions, growth and differentiation. Contains a selenocysteine residue at the C-terminal active site that is essential for catalysis. Also has reductase activity on hydrogen peroxide (H2O2). In terms of biological role, induces actin and tubulin polymerization, leading to formation of cell membrane protrusions. Functionally, enhances the transcriptional activity of estrogen receptors ESR1 and ESR2. Enhances the transcriptional activity of the estrogen receptor ESR2 only. Mediates cell death induced by a combination of interferon-beta and retinoic acid. This Homo sapiens (Human) protein is Thioredoxin reductase 1, cytoplasmic.